A 606-amino-acid polypeptide reads, in one-letter code: Endonuclease 8-like 3 (606 aa).

Valine 2 serves as the catalytic Schiff-base intermediate with DNA; via amino nitrogen. Residues 31–51 form a disordered region; the sequence is ALQGLGGPGSPPAAPGPMGTS. DNA-binding residues include asparagine 194 and arginine 273. An FPG-type zinc finger spans residues 249 to 283; that stretch reads KVYKRPNCGQCCCKITVCRLGENNRMTYFCPHCQK. The RanBP2-type zinc-finger motif lies at 319-348; that stretch reads SEEQWTCEVCTLINKLSSKTCDACLTSRPA. At serine 451 the chain carries Phosphoserine. Zn(2+) is bound by residues cysteine 508, histidine 511, cysteine 534, cysteine 542, cysteine 555, histidine 557, cysteine 580, and cysteine 588. 2 consecutive GRF-type zinc fingers follow at residues 508–551 and 555–597; these read CSKH…ADLS and CNHG…AQNG.

The protein belongs to the FPG family.

It localises to the nucleus. It is found in the chromosome. The enzyme catalyses 2'-deoxyribonucleotide-(2'-deoxyribose 5'-phosphate)-2'-deoxyribonucleotide-DNA = a 3'-end 2'-deoxyribonucleotide-(2,3-dehydro-2,3-deoxyribose 5'-phosphate)-DNA + a 5'-end 5'-phospho-2'-deoxyribonucleoside-DNA + H(+). Functionally, DNA glycosylase which prefers single-stranded DNA (ssDNA), or partially ssDNA structures such as bubble and fork structures, to double-stranded DNA (dsDNA). Mediates interstrand cross-link repair in response to replication stress: acts by mediating DNA glycosylase activity, cleaving one of the two N-glycosyl bonds comprising the interstrand cross-link, which avoids the formation of a double-strand break but generates an abasic site that is bypassed by translesion synthesis polymerases. In vitro, displays strong glycosylase activity towards the hydantoin lesions spiroiminodihydantoin (Sp) and guanidinohydantoin (Gh) in both ssDNA and dsDNA; also recognizes FapyA, FapyG, 5-OHU, 5-OHC, 5-OHMH, Tg and 8-oxoA lesions in ssDNA. No activity on 8-oxoG detected. Also shows weak DNA-(apurinic or apyrimidinic site) lyase activity. In vivo, appears to be the primary enzyme involved in removing Sp and Gh from ssDNA in neonatal tissues. The polypeptide is Endonuclease 8-like 3 (NEIL3) (Bos taurus (Bovine)).